A 371-amino-acid polypeptide reads, in one-letter code: Vasopressin V2 receptor (371 aa).

The tract at residues 1–27 (MILVSTTSAVPGALSSPSSPSNSSQEE) is disordered. Over 1-38 (MILVSTTSAVPGALSSPSSPSNSSQEELLDDRDPLLVR) the chain is Extracellular. Residues 15-24 (SSPSSPSNSS) are compositionally biased toward low complexity. The N-linked (GlcNAc...) asparagine glycan is linked to Asn-22. A helical membrane pass occupies residues 39–63 (AELALLSTIFVAVALSNGLVLGALI). Over 64–77 (RRGRRGRWAPMHVF) the chain is Cytoplasmic. The chain crosses the membrane as a helical span at residues 78-98 (ISHLCLADLAVALFQVLPQLA). Residues 99–113 (WDATDRFHGPDALCR) are Extracellular-facing. The chain crosses the membrane as a helical span at residues 114–135 (AVKYLQMVGMYASSYMILAMTL). Over 136 to 159 (DRHRAICRPMLAYRHGGGARWNRP) the chain is Cytoplasmic. A helical membrane pass occupies residues 160–180 (VLVAWAFSLLLSLPQLFIFAQ). The Extracellular portion of the chain corresponds to 181–200 (RDVGNGSGVFDCWARFAEPW). Asn-185 carries N-linked (GlcNAc...) asparagine glycosylation. Residues 201-220 (GLRAYVTWIALMVFVAPALG) form a helical membrane-spanning segment. Over 221-271 (IAACQVLIFREIHASLVPGPSERAGRRRRGHRTGSPSEGAHVSAAMAKTVR) the chain is Cytoplasmic. The segment at 240 to 259 (PSERAGRRRRGHRTGSPSEG) is disordered. A helical transmembrane segment spans residues 272-293 (MTLVIVIVYVLCWAPFFLVQLW). The Extracellular segment spans residues 294–308 (AAWDPEAPLERPPFV). Residues 309–328 (LLMLLASLNSCTNPWIYASF) form a helical membrane-spanning segment. Residues 329–371 (SSSVSSELRSLLCCAQRHTTHSLGPQDESCATASSSLMKDTPS) are Cytoplasmic-facing. S-palmitoyl cysteine attachment occurs at residues Cys-341 and Cys-342. The interval 349–371 (HSLGPQDESCATASSSLMKDTPS) is disordered. Residues 357-371 (SCATASSSLMKDTPS) show a composition bias toward polar residues.

Belongs to the G-protein coupled receptor 1 family. Vasopressin/oxytocin receptor subfamily. As to quaternary structure, interacts with ARRDC4. Identified in a complex containing at least ARRDC4, V2R and HGS. Interacts with TMEM147. Highly expressed in kidney (at protein level) and moderately expressed in liver (at protein level). No or extremely low expression in left ventricule, muscle, bone and brain (at protein level).

The protein localises to the cell membrane. Functionally, receptor for arginine vasopressin. The activity of this receptor is mediated by G proteins which activate adenylate cyclase. Involved in renal water reabsorption. This chain is Vasopressin V2 receptor (Avpr2), found in Mus musculus (Mouse).